A 110-amino-acid chain; its full sequence is UPF0060 membrane protein Veis_0342 (110 aa).

4 consecutive transmembrane segments (helical) span residues Val-8 to Ile-28, Pro-33 to Leu-53, Ala-63 to Val-83, and Val-90 to Ala-110.

The protein belongs to the UPF0060 family.

The protein localises to the cell inner membrane. This chain is UPF0060 membrane protein Veis_0342, found in Verminephrobacter eiseniae (strain EF01-2).